We begin with the raw amino-acid sequence, 603 residues long: Elongation factor 4 (603 aa).

A tr-type G domain is found at 2–184 (NHIRNFSIIA…AVIARVPPPK (183 aa)). Residues 14–19 (DHGKST) and 131–134 (NKMD) contribute to the GTP site.

It belongs to the TRAFAC class translation factor GTPase superfamily. Classic translation factor GTPase family. LepA subfamily.

It localises to the cell inner membrane. It catalyses the reaction GTP + H2O = GDP + phosphate + H(+). Functionally, required for accurate and efficient protein synthesis under certain stress conditions. May act as a fidelity factor of the translation reaction, by catalyzing a one-codon backward translocation of tRNAs on improperly translocated ribosomes. Back-translocation proceeds from a post-translocation (POST) complex to a pre-translocation (PRE) complex, thus giving elongation factor G a second chance to translocate the tRNAs correctly. Binds to ribosomes in a GTP-dependent manner. This Polaromonas sp. (strain JS666 / ATCC BAA-500) protein is Elongation factor 4.